We begin with the raw amino-acid sequence, 179 residues long: Large ribosomal subunit protein uL5 (179 aa).

It belongs to the universal ribosomal protein uL5 family. Part of the 50S ribosomal subunit; part of the 5S rRNA/L5/L18/L25 subcomplex. Contacts the 5S rRNA and the P site tRNA. Forms a bridge to the 30S subunit in the 70S ribosome.

Functionally, this is one of the proteins that bind and probably mediate the attachment of the 5S RNA into the large ribosomal subunit, where it forms part of the central protuberance. In the 70S ribosome it contacts protein S13 of the 30S subunit (bridge B1b), connecting the 2 subunits; this bridge is implicated in subunit movement. Contacts the P site tRNA; the 5S rRNA and some of its associated proteins might help stabilize positioning of ribosome-bound tRNAs. The sequence is that of Large ribosomal subunit protein uL5 from Desulfosudis oleivorans (strain DSM 6200 / JCM 39069 / Hxd3) (Desulfococcus oleovorans).